The sequence spans 405 residues: Probable tRNA sulfurtransferase (405 aa).

A THUMP domain is found at 60–165 (DAVINRLKKV…SNGIFLTSEV (106 aa)). ATP-binding positions include 183-184 (ML), 208-209 (HF), arginine 265, glycine 287, and glutamine 296.

Belongs to the ThiI family.

It localises to the cytoplasm. It catalyses the reaction [ThiI sulfur-carrier protein]-S-sulfanyl-L-cysteine + a uridine in tRNA + 2 reduced [2Fe-2S]-[ferredoxin] + ATP + H(+) = [ThiI sulfur-carrier protein]-L-cysteine + a 4-thiouridine in tRNA + 2 oxidized [2Fe-2S]-[ferredoxin] + AMP + diphosphate. The enzyme catalyses [ThiS sulfur-carrier protein]-C-terminal Gly-Gly-AMP + S-sulfanyl-L-cysteinyl-[cysteine desulfurase] + AH2 = [ThiS sulfur-carrier protein]-C-terminal-Gly-aminoethanethioate + L-cysteinyl-[cysteine desulfurase] + A + AMP + 2 H(+). It participates in cofactor biosynthesis; thiamine diphosphate biosynthesis. Its function is as follows. Catalyzes the ATP-dependent transfer of a sulfur to tRNA to produce 4-thiouridine in position 8 of tRNAs, which functions as a near-UV photosensor. Also catalyzes the transfer of sulfur to the sulfur carrier protein ThiS, forming ThiS-thiocarboxylate. This is a step in the synthesis of thiazole, in the thiamine biosynthesis pathway. The sulfur is donated as persulfide by IscS. The polypeptide is Probable tRNA sulfurtransferase (Pediococcus pentosaceus (strain ATCC 25745 / CCUG 21536 / LMG 10740 / 183-1w)).